The chain runs to 427 residues: Lactadherin (427 aa).

The N-terminal stretch at 1–22 (MQFSRVLAALCGVLLCASGLFA) is a signal peptide. 2 consecutive EGF-like domains span residues 24 to 61 (SGDF…LVCN) and 64 to 108 (EKGP…IHCE). Disulfide bonds link Cys28–Cys39, Cys33–Cys49, and Cys51–Cys60. Asn61 carries an N-linked (GlcNAc...) asparagine glycan. Disulfide bonds link Cys68/Cys79, Cys73/Cys96, Cys98/Cys107, Cys111/Cys267, Cys254/Cys258, and Cys272/Cys427. Residues 87-89 (RGD) carry the Cell attachment site motif. F5/8 type C domains are found at residues 111 to 267 (CSTK…LLGC) and 272 to 427 (CSEP…LLGC). A glycan (N-linked (GlcNAc...) asparagine) is linked at Asn230. N-linked (GlcNAc...) asparagine glycans are attached at residues Asn280 and Asn390.

Spleen, lung, heart, brain and muscle.

It localises to the membrane. It is found in the secreted. The protein resides in the cytoplasmic vesicle. The protein localises to the secretory vesicle. Its subcellular location is the acrosome membrane. Contributes to phagocytic removal of apoptotic cells in many tissues. Plays an important role in the maintenance of intestinal epithelial homeostasis and the promotion of mucosal healing. Promotes VEGF-dependent neovascularization. Specific ligand for the alpha-v/beta-3 and alpha-v/beta-5 receptors. Also binds to phosphatidylserine-enriched cell surfaces in a receptor-independent manner. Zona pellucida-binding protein which may play a role in gamete interaction. Appears to participate in the O-acetylation of GD3 ganglioside sialic acid. The sequence is that of Lactadherin (Mfge8) from Rattus norvegicus (Rat).